An 808-amino-acid polypeptide reads, in one-letter code: Sucrose synthase 4 (808 aa).

Residues 277–754 form a GT-B glycosyltransferase region; sequence MVFNVVILSP…GLERIQEKYT (478 aa).

Belongs to the glycosyltransferase 1 family. Plant sucrose synthase subfamily. In terms of tissue distribution, detected in the whole plant with highest expression in young rosette leaves and roots.

The enzyme catalyses an NDP-alpha-D-glucose + D-fructose = a ribonucleoside 5'-diphosphate + sucrose + H(+). Sucrose-cleaving enzyme that provides UDP-glucose and fructose for various metabolic pathways. This chain is Sucrose synthase 4 (SUS4), found in Arabidopsis thaliana (Mouse-ear cress).